The primary structure comprises 103 residues: Small ribosomal subunit protein uS10 (103 aa).

The protein belongs to the universal ribosomal protein uS10 family. As to quaternary structure, part of the 30S ribosomal subunit.

Functionally, involved in the binding of tRNA to the ribosomes. This is Small ribosomal subunit protein uS10 from Ruthia magnifica subsp. Calyptogena magnifica.